A 754-amino-acid chain; its full sequence is Neprilysin-1 (754 aa).

Residues 5–27 traverse the membrane as a helical; Signal-anchor for type II membrane protein segment; sequence FGPPIVFLISCYALILCGTVDAL. Asn38, Asn81, Asn132, Asn217, Asn273, Asn303, and Asn441 each carry an N-linked (GlcNAc...) asparagine glycan. The region spanning 63–754 is the Peptidase M13 domain; it reads VGDSEGYQEA…MNPTKRCVVW (692 aa). 4 cysteine pairs are disulfide-bonded: Cys87–Cys739, Cys95–Cys699, Cys151–Cys414, and Cys624–Cys751. His587 contributes to the Zn(2+) binding site. Glu588 is an active-site residue. His591 provides a ligand contact to Zn(2+). Residue Asn612 is glycosylated (N-linked (GlcNAc...) asparagine). Residue Glu649 participates in Zn(2+) binding. Asp653 functions as the Proton donor in the catalytic mechanism.

The protein belongs to the peptidase M13 family. It depends on Zn(2+) as a cofactor. As to expression, specifically expressed in pharyngeal cells and a single head neuron.

The protein resides in the membrane. Probable cell surface protease. Required to control the neuronal innervation of pharyngeal pumping. This is Neprilysin-1 (nep-1) from Caenorhabditis elegans.